The chain runs to 497 residues: tRNA-2-methylthio-N(6)-dimethylallyladenosine synthase (497 aa).

The region spanning 44–161 is the MTTase N-terminal domain; it reads KKVFVTTQGC…LPELYDQSHQ (118 aa). Positions 53, 90, 124, 205, 209, and 212 each coordinate [4Fe-4S] cluster. One can recognise a Radical SAM core domain in the interval 191 to 423; the sequence is RVEGFKAFVS…QKVIIDSTLA (233 aa). One can recognise a TRAM domain in the interval 426-494; that stretch reads HEMVGTTTRV…PHMVKGEIEA (69 aa).

It belongs to the methylthiotransferase family. MiaB subfamily. As to quaternary structure, monomer. [4Fe-4S] cluster serves as cofactor.

The protein localises to the cytoplasm. It catalyses the reaction N(6)-dimethylallyladenosine(37) in tRNA + (sulfur carrier)-SH + AH2 + 2 S-adenosyl-L-methionine = 2-methylsulfanyl-N(6)-dimethylallyladenosine(37) in tRNA + (sulfur carrier)-H + 5'-deoxyadenosine + L-methionine + A + S-adenosyl-L-homocysteine + 2 H(+). Its function is as follows. Catalyzes the methylthiolation of N6-(dimethylallyl)adenosine (i(6)A), leading to the formation of 2-methylthio-N6-(dimethylallyl)adenosine (ms(2)i(6)A) at position 37 in tRNAs that read codons beginning with uridine. This Psychrobacter cryohalolentis (strain ATCC BAA-1226 / DSM 17306 / VKM B-2378 / K5) protein is tRNA-2-methylthio-N(6)-dimethylallyladenosine synthase.